Consider the following 153-residue polypeptide: Small ribosomal subunit protein uS5 (153 aa).

Residues 15-78 (FQEVVVNVGR…DDAFKNLIHV (64 aa)) enclose the S5 DRBM domain.

The protein belongs to the universal ribosomal protein uS5 family. Part of the 30S ribosomal subunit. Contacts proteins S4 and S8.

In terms of biological role, with S4 and S12 plays an important role in translational accuracy. Located at the back of the 30S subunit body where it stabilizes the conformation of the head with respect to the body. In Helicobacter acinonychis (strain Sheeba), this protein is Small ribosomal subunit protein uS5.